Reading from the N-terminus, the 173-residue chain is C-phycocyanin-3 beta subunit (173 aa).

Asparagine 73 is modified (N4-methylasparagine). Cysteine 83 and cysteine 154 together coordinate (2R,3E)-phycocyanobilin.

The protein belongs to the phycobiliprotein family. In terms of assembly, heterodimer of an alpha and a beta subunit, which further assembles into trimers and the trimers into hexamers. In terms of processing, contains two covalently linked bilin chromophores.

Its subcellular location is the cellular thylakoid membrane. Its function is as follows. Light-harvesting photosynthetic bile pigment-protein from the phycobiliprotein complex (phycobilisome, PBS). Phycocyanin is the major phycobiliprotein in the PBS rod. In Microchaete diplosiphon (Fremyella diplosiphon), this protein is C-phycocyanin-3 beta subunit (cpcB3).